Here is a 312-residue protein sequence, read N- to C-terminus: Malate dehydrogenase (312 aa).

NAD(+) contacts are provided by residues 7–13 (GAAGGIG) and Asp34. Residues Arg81 and Arg87 each contribute to the substrate site. NAD(+)-binding positions include Asn94 and 117–119 (ITN). 2 residues coordinate substrate: Asn119 and Arg153. His177 (proton acceptor) is an active-site residue. Residue Met227 participates in NAD(+) binding.

This sequence belongs to the LDH/MDH superfamily. MDH type 1 family. In terms of assembly, homodimer.

The catalysed reaction is (S)-malate + NAD(+) = oxaloacetate + NADH + H(+). Its function is as follows. Catalyzes the reversible oxidation of malate to oxaloacetate. The polypeptide is Malate dehydrogenase (Citrobacter koseri (strain ATCC BAA-895 / CDC 4225-83 / SGSC4696)).